The following is a 585-amino-acid chain: Voltage-gated potassium channel KCNC1 (585 aa).

Over 1-190 the chain is Cytoplasmic; that stretch reads MGQGDESERI…EDPYSSRYAR (190 aa). Position 44 is a phosphoserine (Ser44). Zn(2+) contacts are provided by His77, Cys83, Cys104, and Cys105. The disordered stretch occupies residues 121-147; that stretch reads SFGGAPLDNSADDADADGPGDSGDGED. Residues Ser130, Ser142, Ser158, and Ser160 each carry the phosphoserine modification. Over residues 130-147 the composition is skewed to acidic residues; that stretch reads SADDADADGPGDSGDGED. A helical membrane pass occupies residues 191-209; sequence YVAFASLFFILVSITTFCL. Residues Asn220 and Asn229 are each glycosylated (N-linked (GlcNAc...) asparagine). Residues 248-267 form a helical membrane-spanning segment; sequence IEGVCVVWFTFEFLMRVVFC. At 268–276 the chain is on the cytoplasmic side; the sequence is PNKVEFIKN. The helical transmembrane segment at 277–295 threads the bilayer; the sequence is SLNIIDFVAILPFYLEVGL. The helical; Voltage-sensor transmembrane segment at 309–331 threads the bilayer; that stretch reads FLRVVRFVRILRIFKLTRHFVGL. The Cytoplasmic segment spans residues 332-344; it reads RVLGHTLRASTNE. Residues 345 to 366 traverse the membrane as a helical segment; that stretch reads FLLLIIFLALGVLIFATMIYYA. Thr400, Leu401, Gly402, and Tyr403 together coordinate K(+). Positions 400 to 405 match the Selectivity filter motif; that stretch reads TLGYGD. The chain crosses the membrane as a helical span at residues 415–436; that stretch reads LVGALCALAGVLTIAMPVPVIV. Topologically, residues 437–585 are cytoplasmic; the sequence is NNFGMYYSLA…YMPTEAVRVT (149 aa). A Phosphoserine modification is found at Ser474. Thr483 carries the post-translational modification Phosphothreonine.

This sequence belongs to the potassium channel family. C (Shaw) (TC 1.A.1.2) subfamily. Kv3.1/KCNC1 sub-subfamily. As to quaternary structure, homotetramer. Homomultimer. Heteromultimer with KCNG3, KCNG4 and KCNV2. Heteromultimer with KCNC2. Heterotetramer with KCNC3. Interacts with the ancillary subunits KCNE1 and KCNE2; the interaction modulates channel activity. In terms of processing, N-glycosylated; contains sialylated glycans. As to expression, expressed in brain. Expressed in globus pallidal neurons of the basal ganglia (at protein level). Detected on Purkinje cells in the cerebellum molecular layer (at protein level).

It localises to the cell membrane. The protein localises to the cell projection. Its subcellular location is the axon. It is found in the presynaptic cell membrane. The catalysed reaction is K(+)(in) = K(+)(out). Voltage-gated potassium channel that opens in response to the voltage difference across the membrane and through which potassium ions pass in accordance with their electrochemical gradient. The mechanism is time-dependent and inactivation is slow. Plays an important role in the rapid repolarization of fast-firing brain neurons. Can form functional homotetrameric channels and heterotetrameric channels that contain variable proportions of KCNC2, and possibly other family members as well. Contributes to fire sustained trains of very brief action potentials at high frequency in pallidal neurons. The sequence is that of Voltage-gated potassium channel KCNC1 from Rattus norvegicus (Rat).